A 255-amino-acid polypeptide reads, in one-letter code: Pyrroloquinoline-quinone synthase (255 aa).

The protein belongs to the PqqC family.

The enzyme catalyses 6-(2-amino-2-carboxyethyl)-7,8-dioxo-1,2,3,4,7,8-hexahydroquinoline-2,4-dicarboxylate + 3 O2 = pyrroloquinoline quinone + 2 H2O2 + 2 H2O + H(+). Its pathway is cofactor biosynthesis; pyrroloquinoline quinone biosynthesis. In terms of biological role, ring cyclization and eight-electron oxidation of 3a-(2-amino-2-carboxyethyl)-4,5-dioxo-4,5,6,7,8,9-hexahydroquinoline-7,9-dicarboxylic-acid to PQQ. The chain is Pyrroloquinoline-quinone synthase from Acinetobacter baylyi (strain ATCC 33305 / BD413 / ADP1).